The following is a 266-amino-acid chain: tRNA dimethylallyltransferase (266 aa).

It belongs to the IPP transferase family. In terms of assembly, monomer. Requires Mg(2+) as cofactor.

The catalysed reaction is adenosine(37) in tRNA + dimethylallyl diphosphate = N(6)-dimethylallyladenosine(37) in tRNA + diphosphate. Catalyzes the transfer of a dimethylallyl group onto the adenine at position 37 in tRNAs that read codons beginning with uridine, leading to the formation of N6-(dimethylallyl)adenosine (i(6)A). The chain is tRNA dimethylallyltransferase (miaA) from Helicobacter acinonychis (strain Sheeba).